The primary structure comprises 176 residues: NAD(P)H-quinone oxidoreductase subunit 6, chloroplastic (176 aa).

5 helical membrane passes run 10–30 (FLLV…VLLP), 32–52 (PIYS…FYIL), 61–81 (AQLL…VMFM), 92–112 (LWTV…VSLI), and 152–172 (FFLP…GAIT).

It belongs to the complex I subunit 6 family. As to quaternary structure, NDH is composed of at least 16 different subunits, 5 of which are encoded in the nucleus.

The protein localises to the plastid. The protein resides in the chloroplast thylakoid membrane. It carries out the reaction a plastoquinone + NADH + (n+1) H(+)(in) = a plastoquinol + NAD(+) + n H(+)(out). The enzyme catalyses a plastoquinone + NADPH + (n+1) H(+)(in) = a plastoquinol + NADP(+) + n H(+)(out). Functionally, NDH shuttles electrons from NAD(P)H:plastoquinone, via FMN and iron-sulfur (Fe-S) centers, to quinones in the photosynthetic chain and possibly in a chloroplast respiratory chain. The immediate electron acceptor for the enzyme in this species is believed to be plastoquinone. Couples the redox reaction to proton translocation, and thus conserves the redox energy in a proton gradient. The chain is NAD(P)H-quinone oxidoreductase subunit 6, chloroplastic (ndhG) from Daucus carota (Wild carrot).